The following is a 185-amino-acid chain: Flavodoxin (185 aa).

In terms of domain architecture, Flavodoxin-like spans 4-159 (VLVIYDTRTG…ACRRLGRRLA (156 aa)).

Belongs to the flavodoxin family. The cofactor is FMN.

Low-potential electron donor to a number of redox enzymes. This Aquifex aeolicus (strain VF5) protein is Flavodoxin (fldA).